Consider the following 451-residue polypeptide: Trigger factor (451 aa).

A PPIase FKBP-type domain is found at Gly-163–Pro-248.

The protein belongs to the FKBP-type PPIase family. Tig subfamily.

It localises to the cytoplasm. It carries out the reaction [protein]-peptidylproline (omega=180) = [protein]-peptidylproline (omega=0). In terms of biological role, involved in protein export. Acts as a chaperone by maintaining the newly synthesized protein in an open conformation. Functions as a peptidyl-prolyl cis-trans isomerase. The protein is Trigger factor of Leptospira borgpetersenii serovar Hardjo-bovis (strain JB197).